Reading from the N-terminus, the 396-residue chain is Actin-related protein 6 (396 aa).

At Thr2 the chain carries N-acetylthreonine. An N6-acetyllysine modification is found at Lys260.

It belongs to the actin family. ARP6 subfamily. In terms of assembly, component of the chromatin-remodeling SRCAP complex composed of at least SRCAP, DMAP1, RUVBL1, RUVBL2, ACTL6A, YEATS4, ACTR6 and ZNHIT1. Interacts with CBX1, CBX3 and CBX5.

It is found in the cytoplasm. It localises to the cytoskeleton. The protein localises to the nucleus. Its subcellular location is the nucleolus. Required for formation and/or maintenance of proper nucleolar structure and function. Plays a dual role in the regulation of ribosomal DNA (rDNA) transcription. In the presence of high glucose, maintains active rDNA transcription through H2A.Z deposition and under glucose starvation, is required for the repression of rDNA transcription, and this function may be independent of H2A.Z. This Mus musculus (Mouse) protein is Actin-related protein 6 (Actr6).